Reading from the N-terminus, the 34-residue chain is uncharacterized protein (34 aa).

This is an uncharacterized protein from Haemophilus influenzae (strain ATCC 51907 / DSM 11121 / KW20 / Rd).